The chain runs to 203 residues: Guanylate kinase (203 aa).

The Guanylate kinase-like domain maps to 3 to 181; sequence GTLYIVAAPS…AVSEMCAIFT (179 aa). 10–17 is a binding site for ATP; that stretch reads APSGAGKS.

It belongs to the guanylate kinase family.

It is found in the cytoplasm. The enzyme catalyses GMP + ATP = GDP + ADP. Its function is as follows. Essential for recycling GMP and indirectly, cGMP. This Xanthomonas oryzae pv. oryzae (strain MAFF 311018) protein is Guanylate kinase.